Reading from the N-terminus, the 322-residue chain is DNA repair and recombination protein RadA (322 aa).

105 to 112 serves as a coordination point for ATP; sequence GMFGSGKT.

This sequence belongs to the eukaryotic RecA-like protein family.

Functionally, involved in DNA repair and in homologous recombination. Binds and assemble on single-stranded DNA to form a nucleoprotein filament. Hydrolyzes ATP in a ssDNA-dependent manner and promotes DNA strand exchange between homologous DNA molecules. The polypeptide is DNA repair and recombination protein RadA (Methanococcus maripaludis (strain DSM 14266 / JCM 13030 / NBRC 101832 / S2 / LL)).